We begin with the raw amino-acid sequence, 650 residues long: 1-deoxy-D-xylulose-5-phosphate synthase (650 aa).

Thiamine diphosphate contacts are provided by residues His-87 and 128–130 (GHS). Asp-159 contributes to the Mg(2+) binding site. Thiamine diphosphate is bound by residues 160-161 (GS), Asn-188, Tyr-299, and Glu-383. Asn-188 contacts Mg(2+).

The protein belongs to the transketolase family. DXPS subfamily. In terms of assembly, homodimer. It depends on Mg(2+) as a cofactor. Requires thiamine diphosphate as cofactor.

The catalysed reaction is D-glyceraldehyde 3-phosphate + pyruvate + H(+) = 1-deoxy-D-xylulose 5-phosphate + CO2. It functions in the pathway metabolic intermediate biosynthesis; 1-deoxy-D-xylulose 5-phosphate biosynthesis; 1-deoxy-D-xylulose 5-phosphate from D-glyceraldehyde 3-phosphate and pyruvate: step 1/1. Catalyzes the acyloin condensation reaction between C atoms 2 and 3 of pyruvate and glyceraldehyde 3-phosphate to yield 1-deoxy-D-xylulose-5-phosphate (DXP). The polypeptide is 1-deoxy-D-xylulose-5-phosphate synthase (Syntrophus aciditrophicus (strain SB)).